The sequence spans 188 residues: Probable thiol:disulfide interchange protein DsbE-2 (188 aa).

Over 1–11 (MSMLHQQKRKN) the chain is Cytoplasmic. A helical transmembrane segment spans residues 12-32 (HFVFLPLVILLAVCALLFIGL). Topologically, residues 33 to 188 (QQDPQKIASA…KLEAENAKVR (156 aa)) are periplasmic. The Thioredoxin domain occupies 42–179 (ALIGKPVPTF…QEMFIPEWQK (138 aa)). A disulfide bond links Cys82 and Cys85.

Belongs to the thioredoxin family. DsbE subfamily.

It localises to the cell inner membrane. In terms of biological role, could be involved in disulfide bond formation. Could catalyzes a late, reductive step in the assembly of periplasmic NrfA c-type cytochrome, probably the reduction of disulfide bonds of the apocytochrome c to allow covalent linkage with the heme. Possible subunit of a heme lyase. The chain is Probable thiol:disulfide interchange protein DsbE-2 (nrfX) from Pasteurella multocida (strain Pm70).